The following is a 169-amino-acid chain: Shikimate kinase (169 aa).

12-17 (AVGKTT) lines the ATP pocket. A Mg(2+)-binding site is contributed by Thr-16. Positions 34, 58, and 80 each coordinate substrate. Position 119 (Arg-119) interacts with ATP. Residue Arg-139 coordinates substrate. Arg-156 is an ATP binding site.

Belongs to the shikimate kinase family. In terms of assembly, monomer. Mg(2+) serves as cofactor.

The protein resides in the cytoplasm. The enzyme catalyses shikimate + ATP = 3-phosphoshikimate + ADP + H(+). It participates in metabolic intermediate biosynthesis; chorismate biosynthesis; chorismate from D-erythrose 4-phosphate and phosphoenolpyruvate: step 5/7. Functionally, catalyzes the specific phosphorylation of the 3-hydroxyl group of shikimic acid using ATP as a cosubstrate. The sequence is that of Shikimate kinase from Alkaliphilus oremlandii (strain OhILAs) (Clostridium oremlandii (strain OhILAs)).